We begin with the raw amino-acid sequence, 176 residues long: CDP-archaeol synthase (176 aa).

5 consecutive transmembrane segments (helical) span residues 12–32 (FIYWFLKYYLSPMIANASPVL), 60–80 (GFYVGVLMGFLTSIGIGIILC), 85–105 (ILIGLGSSIFALIGDLLGSFI), 118–138 (PIIDQLDFALMATLYYYFLGI), and 141–161 (FISYPLYILYSLIIILALHII).

It belongs to the CDP-archaeol synthase family. The cofactor is Mg(2+).

It localises to the cell membrane. It catalyses the reaction 2,3-bis-O-(geranylgeranyl)-sn-glycerol 1-phosphate + CTP + H(+) = CDP-2,3-bis-O-(geranylgeranyl)-sn-glycerol + diphosphate. The protein operates within membrane lipid metabolism; glycerophospholipid metabolism. Functionally, catalyzes the formation of CDP-2,3-bis-(O-geranylgeranyl)-sn-glycerol (CDP-archaeol) from 2,3-bis-(O-geranylgeranyl)-sn-glycerol 1-phosphate (DGGGP) and CTP. This reaction is the third ether-bond-formation step in the biosynthesis of archaeal membrane lipids. The sequence is that of CDP-archaeol synthase from Staphylothermus marinus (strain ATCC 43588 / DSM 3639 / JCM 9404 / F1).